We begin with the raw amino-acid sequence, 207 residues long: Protein FAM177A1 (207 aa).

M1 carries the N-acetylmethionine modification. A Phosphoserine modification is found at S65. T66 is subject to Phosphothreonine. Positions 131–170 form a coiled coil; that stretch reads IDEYYRMKKEEEEEEEENRMSEEAERQYQQNKLQADSIVQ. The segment at 142–176 is disordered; sequence EEEEEENRMSEEAERQYQQNKLQADSIVQTDQPET. Positions 157-176 are enriched in polar residues; that stretch reads QYQQNKLQADSIVQTDQPET.

Belongs to the FAM177 family.

This chain is Protein FAM177A1 (Fam177a1), found in Mus musculus (Mouse).